The chain runs to 335 residues: Peroxidase 2 (335 aa).

Residues Met1 to Ala29 form the signal peptide. 4 disulfide bridges follow: Cys44–Cys125, Cys77–Cys82, Cys131–Cys329, and Cys212–Cys238. His75 (proton acceptor) is an active-site residue. Asp76, Val79, Gly81, Asp83, and Ser85 together coordinate Ca(2+). Asn166 and Asn180 each carry an N-linked (GlcNAc...) asparagine glycan. Residue His205 participates in heme b binding. Thr206 provides a ligand contact to Ca(2+). An N-linked (GlcNAc...) asparagine glycan is attached at Asn241. Ca(2+) is bound by residues Asp253, Thr256, and Asp261.

Belongs to the peroxidase family. Classical plant (class III) peroxidase subfamily. The cofactor is heme b. Ca(2+) is required as a cofactor. In terms of tissue distribution, expressed in the elongating region of young roots, and in root vascular tissues and epidermis.

It localises to the secreted. The enzyme catalyses 2 a phenolic donor + H2O2 = 2 a phenolic radical donor + 2 H2O. Its function is as follows. Removal of H(2)O(2), oxidation of toxic reductants, biosynthesis and degradation of lignin, suberization, auxin catabolism, response to environmental stresses such as wounding, pathogen attack and oxidative stress. These functions might be dependent on each isozyme/isoform in each plant tissue. This is Peroxidase 2 (PER2) from Zea mays (Maize).